We begin with the raw amino-acid sequence, 223 residues long: RNA-free ribonuclease P (223 aa).

The protein belongs to the HARP family.

It catalyses the reaction Endonucleolytic cleavage of RNA, removing 5'-extranucleotides from tRNA precursor.. RNA-free RNase P that catalyzes the removal of the 5'-leader sequence from pre-tRNA to produce the mature 5'-terminus. This chain is RNA-free ribonuclease P, found in Methanococcus maripaludis (strain C5 / ATCC BAA-1333).